A 197-amino-acid chain; its full sequence is Large ribosomal subunit protein uL13B (197 aa).

Serine 193 carries the post-translational modification Phosphoserine.

Belongs to the universal ribosomal protein uL13 family. In terms of assembly, component of the large ribosomal subunit (LSU). Mature yeast ribosomes consist of a small (40S) and a large (60S) subunit. The 40S small subunit contains 1 molecule of ribosomal RNA (18S rRNA) and at least 33 different proteins. The large 60S subunit contains 3 rRNA molecules (25S, 5.8S and 5S rRNA) and at least 46 different proteins.

The protein resides in the cytoplasm. In terms of biological role, component of the ribosome, a large ribonucleoprotein complex responsible for the synthesis of proteins in the cell. The small ribosomal subunit (SSU) binds messenger RNAs (mRNAs) and translates the encoded message by selecting cognate aminoacyl-transfer RNA (tRNA) molecules. The large subunit (LSU) contains the ribosomal catalytic site termed the peptidyl transferase center (PTC), which catalyzes the formation of peptide bonds, thereby polymerizing the amino acids delivered by tRNAs into a polypeptide chain. The nascent polypeptides leave the ribosome through a tunnel in the LSU and interact with protein factors that function in enzymatic processing, targeting, and the membrane insertion of nascent chains at the exit of the ribosomal tunnel. The sequence is that of Large ribosomal subunit protein uL13B (rpl1601) from Schizosaccharomyces pombe (strain 972 / ATCC 24843) (Fission yeast).